A 685-amino-acid polypeptide reads, in one-letter code: Nucleolar protein 4 (685 aa).

The disordered stretch occupies residues 1-21 (MEETIENVEVPSSNVSKQNDD). One can recognise an RRM 1 domain in the interval 26-103 (KTLFVRSIPQ…HILRVDIAKR (78 aa)). Over residues 106–123 (RSKKTSEVVEKSTPESSE) the composition is skewed to basic and acidic residues. Positions 106 to 142 (RSKKTSEVVEKSTPESSEKITGQNNEDEDDADGEDSM) are disordered. The span at 130–140 (NEDEDDADGED) shows a compositional bias: acidic residues. An RRM 2 domain is found at 147–225 (PKLIIRNMPW…RKVAVDFAVQ (79 aa)). A compositionally biased stretch (basic and acidic residues) spans 231–242 (DYKKAQPEMNDK). A disordered region spans residues 231 to 285 (DYKKAQPEMNDKDDNESGNEDAEENHDDEEDENEEEDRQVDQASKNKESKRKAQN). Residues 243 to 268 (DDNESGNEDAEENHDDEEDENEEEDR) show a composition bias toward acidic residues. The residue at position 247 (Ser247) is a Phosphoserine. RRM domains lie at 290–383 (FSVF…PTLV) and 462–612 (TRLA…FAIE). The residue at position 379 (Thr379) is a Phosphothreonine. Positions 622 to 631 (EQLKQARTKR) are enriched in basic residues. The tract at residues 622 to 685 (EQLKQARTKR…FKRKRKHAKK (64 aa)) is disordered. A compositionally biased stretch (basic and acidic residues) spans 645–672 (SENKKPKKEEATTPTNPDDKKMGDDIKR). Residues 674–685 (IGFKRKRKHAKK) are compositionally biased toward basic residues.

In terms of assembly, interacts with NOP1.

The protein localises to the nucleus. It is found in the nucleolus. Its function is as follows. Required for 60S ribosomal subunit synthesis. Probably involved in the processing of 27S rRNA to produce mature 25S rRNA. The protein is Nucleolar protein 4 (NOP4) of Saccharomyces cerevisiae (strain ATCC 204508 / S288c) (Baker's yeast).